The sequence spans 86 residues: uncharacterized protein (86 aa).

This is an uncharacterized protein from Bacillus subtilis (strain 168).